The sequence spans 204 residues: High frequency lysogenization protein HflD homolog (204 aa).

The protein belongs to the HflD family.

Its subcellular location is the cytoplasm. The protein localises to the cell inner membrane. In Stenotrophomonas maltophilia (strain R551-3), this protein is High frequency lysogenization protein HflD homolog.